The sequence spans 436 residues: O-phosphoseryl-tRNA(Sec) selenium transferase (436 aa).

The segment at 1-44 (MLDFNIEGLIPKNMEKRGELVLNEYLKEIEDVFNHRKIPENGID) is tetramerization. Arg72 contributes to the pyridoxal 5'-phosphate binding site. The tract at residues 93–103 (GRSGNLVDPQP) is phosphate loop (P-loop). Substrate contacts are provided by Arg94, Ser95, and Gln102. Lys278 carries the N6-(pyridoxal phosphate)lysine modification. Arg307 is a substrate binding site.

Belongs to the SepSecS family. Homotetramer. Pyridoxal 5'-phosphate serves as cofactor.

The catalysed reaction is O-phospho-L-seryl-tRNA(Sec) + selenophosphate + H2O = L-selenocysteinyl-tRNA(Sec) + 2 phosphate. It functions in the pathway aminoacyl-tRNA biosynthesis; selenocysteinyl-tRNA(Sec) biosynthesis; selenocysteinyl-tRNA(Sec) from L-seryl-tRNA(Sec) (archaeal/eukaryal route): step 2/2. In terms of biological role, converts O-phosphoseryl-tRNA(Sec) to selenocysteinyl-tRNA(Sec) required for selenoprotein biosynthesis. The chain is O-phosphoseryl-tRNA(Sec) selenium transferase (spcS) from Methanococcus maripaludis (strain DSM 14266 / JCM 13030 / NBRC 101832 / S2 / LL).